The chain runs to 282 residues: 2-dehydro-3-deoxyphosphooctonate aldolase (282 aa).

Belongs to the KdsA family.

The protein resides in the cytoplasm. The catalysed reaction is D-arabinose 5-phosphate + phosphoenolpyruvate + H2O = 3-deoxy-alpha-D-manno-2-octulosonate-8-phosphate + phosphate. It functions in the pathway carbohydrate biosynthesis; 3-deoxy-D-manno-octulosonate biosynthesis; 3-deoxy-D-manno-octulosonate from D-ribulose 5-phosphate: step 2/3. It participates in bacterial outer membrane biogenesis; lipopolysaccharide biosynthesis. The chain is 2-dehydro-3-deoxyphosphooctonate aldolase from Bradyrhizobium diazoefficiens (strain JCM 10833 / BCRC 13528 / IAM 13628 / NBRC 14792 / USDA 110).